Consider the following 354-residue polypeptide: Serum paraoxonase/arylesterase 2 (354 aa).

Asn-29 carries an N-linked (GlcNAc...) asparagine glycan. Cys-42 and Cys-352 are disulfide-bonded. 2 residues coordinate Ca(2+): Glu-53 and Asp-54. His-114 (proton acceptor) is an active-site residue. Positions 116, 167, 168, and 223 each coordinate Ca(2+). An N-linked (GlcNAc...) asparagine glycan is attached at Asn-254. Ca(2+)-binding residues include Asp-268 and Asn-269. N-linked (GlcNAc...) asparagine glycosylation is found at Asn-269 and Asn-323.

Belongs to the paraoxonase family. Requires Ca(2+) as cofactor. Glycosylated. Post-translationally, the signal sequence is not cleaved.

The protein localises to the membrane. The enzyme catalyses a phenyl acetate + H2O = a phenol + acetate + H(+). It catalyses the reaction An aryl dialkyl phosphate + H2O = dialkyl phosphate + an aryl alcohol.. The absence of paraoxonase activity in turkey and chicken blood and in turkey liver indicates that PON2, if expressed, does not hydrolyze paraoxon. The polypeptide is Serum paraoxonase/arylesterase 2 (PON2) (Gallus gallus (Chicken)).